Reading from the N-terminus, the 543-residue chain is ATP synthase subunit alpha (543 aa).

An ATP-binding site is contributed by 174 to 181; the sequence is GDRQTGKT. Positions 521–543 are disordered; sequence VEKKPDVDKAAPVDQEKIVAGEK.

The protein belongs to the ATPase alpha/beta chains family. As to quaternary structure, F-type ATPases have 2 components, CF(1) - the catalytic core - and CF(0) - the membrane proton channel. CF(1) has five subunits: alpha(3), beta(3), gamma(1), delta(1), epsilon(1). CF(0) has three main subunits: a(1), b(2) and c(9-12). The alpha and beta chains form an alternating ring which encloses part of the gamma chain. CF(1) is attached to CF(0) by a central stalk formed by the gamma and epsilon chains, while a peripheral stalk is formed by the delta and b chains.

It localises to the cell membrane. It carries out the reaction ATP + H2O + 4 H(+)(in) = ADP + phosphate + 5 H(+)(out). Produces ATP from ADP in the presence of a proton gradient across the membrane. The alpha chain is a regulatory subunit. The sequence is that of ATP synthase subunit alpha from Bifidobacterium longum (strain DJO10A).